Consider the following 175-residue polypeptide: Large ribosomal subunit protein uL10 (175 aa).

The protein belongs to the universal ribosomal protein uL10 family. As to quaternary structure, part of the ribosomal stalk of the 50S ribosomal subunit. The N-terminus interacts with L11 and the large rRNA to form the base of the stalk. The C-terminus forms an elongated spine to which L12 dimers bind in a sequential fashion forming a multimeric L10(L12)X complex.

Its function is as follows. Forms part of the ribosomal stalk, playing a central role in the interaction of the ribosome with GTP-bound translation factors. This is Large ribosomal subunit protein uL10 from Prochlorococcus marinus (strain MIT 9215).